Consider the following 142-residue polypeptide: Hemoglobin subunit alpha-A (142 aa).

Positions 2 to 142 constitute a Globin domain; that stretch reads VLSAADKTNV…VGAVLTAKYR (141 aa). Histidine 59 is a binding site for O2. Histidine 88 lines the heme b pocket.

The protein belongs to the globin family. As to quaternary structure, heterotetramer of two alpha chains and two beta chains. As to expression, red blood cells.

Its function is as follows. Involved in oxygen transport from the lung to the various peripheral tissues. The polypeptide is Hemoglobin subunit alpha-A (HBAA) (Mareca penelope (Eurasian wigeon)).